A 1486-amino-acid chain; its full sequence is MIERGKFRSLTLINWNGFFARTFDLDELVTTLSGGNGAGKSTTMAAFVTALIPDLTLLHFRNTTEAGATSGSRDKGLHGKLKAGVCYSMLDTINSRHQRVVVGVRLQQVAGRDRKVDIKPFAIQGLPMSVQPTQLVTETLSERQARVLPLNELKDKLEAMEGVQFKQFNSITDYHSLMFDLGIIARRLRSASDRSKFYRLIEASLYGGISSAITRSLRDYLLPENSGVRKAFQDMEAALRENRMTLEAIRVTQSDRDLFKHLISEATNYVAADYMRHANERRVHLDKALEFRRELHTSRQQLAAEQYKHVDMARELAEHNGAEGDLEADYQAASDHLNLVQTALRQQEKIERYEADLDELQIRLEEQNEVVAEAIERQEENEARAEAAELEVDELKSQLADYQQALDVQQTRAIQYNQAIAALNRAKELCHLPDLTADSAAEWLETFQAKELEATEKMLSLEQKMSMAQTAHSQFEQAYQLVVAINGPLARNEAWDVARELLREGVDQRHLAEQVQPLRMRLSELEQRLREQQEAERLLADFCKRQGKNFDIDELEALHQELEARIASLSDSVSNAREERMTLRQEQEQLQSRIQSLMRRAPVWLAAQNSLNQLSEQCGEEFSSSQDVTEYLQQLLEREREAIVERDEVGARKNAVDEEIERLSQPGGSEDQRLNALAERFGGVLLSEIYDDVSLEDAPYFSALYGPSRHAIVVPDLSQVTEHLEGLTDCPEDLYLIEGDPQSFDDSVFSVDELEKAVVVKIADRQWRYSRFPEVPLFGRAARESRIESLHAEREVLSERFATLSFDVQKTQRLHQAFSRFIGSHLAVAFESDPEAEIRQLNSRRVELERALSNHENDNQQQRIQFEQAKEGVTALNRILPRLNLLADDSLADRVDEIRERLDEAQEAARFVQQFGNQLAKLEPIVSVLQSDPEQFEQLKEDYAYSQQMQRDARQQAFALTEVVQRRAHFSYSDSAEMLSGNSDLNEKLRERLEQAEAERTRAREALRGHAAQLSQYNQVLASLKSSYDTKKELLNDLQRELQDIGVRADSGAEERARIRRDELHAQLSNNRSRRNQLEKALTFCEAEMDNLTRKLRKLERDYFEMREQVVTAKAGWCAVMRMVKDNGVERRLHRRELAYLSADDLRSMSDKALGALRLAVADNEHLRDVLRMSEDPKRPERKIQFFVAVYQHLRERIRQDIIRTDDPVEAIEQMEIELSRLTEELTSREQKLAISSRSVANIIRKTIQREQNRIRMLNQGLQNVSFGQVNSVRLNVNVRETHAMLLDVLSEQHEQHQDLFNSNRLTFSEALAKLYQRLNPQIDMGQRTPQTIGEELLDYRNYLEMEVEVNRGSDGWLRAESGALSTGEAIGTGMSILVMVVQSWEDESRRLRGKDISPCRLLFLDEAARLDARSIATLFELCERLQMQLIIAAPENISPEKGTTYKLVRKVFQNTEHVHVVGLRGFAPQLPETLPGSDEAPSQAS.

An ATP-binding site is contributed by Gly34–Ser41. 3 coiled-coil regions span residues Leu326–Gln418, Leu444–Gln480, and Arg509–Val603. The tract at residues Pro666–Arg783 is flexible hinge. Coiled-coil stretches lie at residues Glu835 to Glu923, Glu977 to Ala1115, and Val1209 to Ser1266.

This sequence belongs to the SMC family. MukB subfamily. In terms of assembly, homodimerization via its hinge domain. Binds to DNA via its C-terminal region. Interacts, and probably forms a ternary complex, with MukE and MukF via its C-terminal region. The complex formation is stimulated by calcium or magnesium. Interacts with tubulin-related protein FtsZ.

It is found in the cytoplasm. Its subcellular location is the nucleoid. Functionally, plays a central role in chromosome condensation, segregation and cell cycle progression. Functions as a homodimer, which is essential for chromosome partition. Involved in negative DNA supercoiling in vivo, and by this means organize and compact chromosomes. May achieve or facilitate chromosome segregation by condensation DNA from both sides of a centrally located replisome during cell division. This chain is Chromosome partition protein MukB, found in Escherichia coli (strain SMS-3-5 / SECEC).